We begin with the raw amino-acid sequence, 148 residues long: MMSVLVIVGCPEPPALIPSVLYLTNQLKKKGFNVIIAANPAALKLLEVADDDKYYLKGVGAVDIDGGLRGIEGINKIISFVHNDGGVSYTVTYKAKYNKPTYAIVFGRQINKDYVETLKNSNIGVYTARAFHNPMPIVNRIKEILANL.

This is an uncharacterized protein from Methanocaldococcus jannaschii (strain ATCC 43067 / DSM 2661 / JAL-1 / JCM 10045 / NBRC 100440) (Methanococcus jannaschii).